The primary structure comprises 375 residues: Chaperone protein DnaJ (375 aa).

Positions 5-70 constitute a J domain; it reads DFYETLGVAK…QKRAAYDRYG (66 aa). The segment at 136-214 adopts a CR-type zinc-finger fold; that stretch reads GKTAQIRVPT…CHGQGRVTEE (79 aa). Cysteine 149, cysteine 152, cysteine 166, cysteine 169, cysteine 188, cysteine 191, cysteine 202, and cysteine 205 together coordinate Zn(2+). CXXCXGXG motif repeat units follow at residues 149-156, 166-173, 188-195, and 202-209; these read CDVCSGSG, CGTCQGSG, CPTCHGRG, and CPKCHGQG.

Belongs to the DnaJ family. In terms of assembly, homodimer. It depends on Zn(2+) as a cofactor.

It localises to the cytoplasm. Participates actively in the response to hyperosmotic and heat shock by preventing the aggregation of stress-denatured proteins and by disaggregating proteins, also in an autonomous, DnaK-independent fashion. Unfolded proteins bind initially to DnaJ; upon interaction with the DnaJ-bound protein, DnaK hydrolyzes its bound ATP, resulting in the formation of a stable complex. GrpE releases ADP from DnaK; ATP binding to DnaK triggers the release of the substrate protein, thus completing the reaction cycle. Several rounds of ATP-dependent interactions between DnaJ, DnaK and GrpE are required for fully efficient folding. Also involved, together with DnaK and GrpE, in the DNA replication of plasmids through activation of initiation proteins. This is Chaperone protein DnaJ from Rhizobium etli (strain CIAT 652).